The sequence spans 302 residues: Ribonucleoside-diphosphate reductase small subunit (302 aa).

Residues Glu-61, Glu-91, and His-94 each contribute to the Fe cation site. Tyr-98 is a catalytic residue. A helical membrane pass occupies residues 147-167 (ILVFLLIEGIFFISSFYSIAL). Positions 154, 188, and 191 each coordinate Fe cation.

This sequence belongs to the ribonucleoside diphosphate reductase small chain family. As to quaternary structure, heterotetramer composed of a homodimer of the large subunit (R1) and a homodimer of the small subunit (R2). Larger multisubunit protein complex are also active, composed of (R1)n(R2)n. Requires Fe cation as cofactor.

It is found in the host membrane. The catalysed reaction is a 2'-deoxyribonucleoside 5'-diphosphate + [thioredoxin]-disulfide + H2O = a ribonucleoside 5'-diphosphate + [thioredoxin]-dithiol. Functionally, ribonucleoside-diphosphate reductase holoenzyme provides the precursors necessary for viral DNA synthesis. Allows virus growth in non-dividing cells, as well as reactivation from latency in infected hosts. Catalyzes the biosynthesis of deoxyribonucleotides from the corresponding ribonucleotides. In Homo sapiens (Human), this protein is Ribonucleoside-diphosphate reductase small subunit.